Consider the following 140-residue polypeptide: Small ribosomal subunit protein uS12m (140 aa).

The N-terminal 30 residues, 1–30 (MNFLRQSFGITKQLASQAIQCSYETAVRGM), are a transit peptide targeting the mitochondrion.

It belongs to the universal ribosomal protein uS12 family.

The protein resides in the mitochondrion. In Drosophila melanogaster (Fruit fly), this protein is Small ribosomal subunit protein uS12m (tko).